The chain runs to 99 residues: RNA-binding protein Hfq (99 aa).

A Sm domain is found at 9 to 68 (DPFLNALRRERVPVSIYLVNGIKLQGQIESFDQFVILLKNTVSQMVYKHAISTVVPSRPV). Positions 64-99 (PSRPVSHHSNNPGGGSNYHGNNTAASQQSQEADDAE) are disordered.

Belongs to the Hfq family. As to quaternary structure, homohexamer.

RNA chaperone that binds small regulatory RNA (sRNAs) and mRNAs to facilitate mRNA translational regulation in response to envelope stress, environmental stress and changes in metabolite concentrations. Also binds with high specificity to tRNAs. In Pectobacterium carotovorum subsp. carotovorum (strain PC1), this protein is RNA-binding protein Hfq.